The chain runs to 389 residues: 8-amino-7-oxononanoate synthase (389 aa).

Residue arginine 19 coordinates substrate. Position 106-107 (106-107) interacts with pyridoxal 5'-phosphate; it reads GY. Residue histidine 131 participates in substrate binding. Pyridoxal 5'-phosphate-binding residues include serine 176, histidine 204, and threonine 233. Lysine 236 is subject to N6-(pyridoxal phosphate)lysine. Threonine 350 is a binding site for substrate.

Belongs to the class-II pyridoxal-phosphate-dependent aminotransferase family. BioF subfamily. In terms of assembly, homodimer. It depends on pyridoxal 5'-phosphate as a cofactor.

It carries out the reaction 6-carboxyhexanoyl-[ACP] + L-alanine + H(+) = (8S)-8-amino-7-oxononanoate + holo-[ACP] + CO2. Its pathway is cofactor biosynthesis; biotin biosynthesis. Functionally, catalyzes the decarboxylative condensation of pimeloyl-[acyl-carrier protein] and L-alanine to produce 8-amino-7-oxononanoate (AON), [acyl-carrier protein], and carbon dioxide. The sequence is that of 8-amino-7-oxononanoate synthase from Ectopseudomonas mendocina (strain ymp) (Pseudomonas mendocina).